The following is a 413-amino-acid chain: Putative glutamate--cysteine ligase 2 (413 aa).

The interval 392-413 (GGVCALSTPQGDPLPGWAERLH) is disordered.

The protein belongs to the glutamate--cysteine ligase type 2 family. YbdK subfamily.

It carries out the reaction L-cysteine + L-glutamate + ATP = gamma-L-glutamyl-L-cysteine + ADP + phosphate + H(+). ATP-dependent carboxylate-amine ligase which exhibits weak glutamate--cysteine ligase activity. The sequence is that of Putative glutamate--cysteine ligase 2 from Bordetella bronchiseptica (strain ATCC BAA-588 / NCTC 13252 / RB50) (Alcaligenes bronchisepticus).